The following is a 267-amino-acid chain: L-aspartate dehydrogenase (267 aa).

Residues Ala124 and Asn190 each coordinate NAD(+). His220 is an active-site residue.

This sequence belongs to the L-aspartate dehydrogenase family.

The enzyme catalyses L-aspartate + NADP(+) + H2O = oxaloacetate + NH4(+) + NADPH + H(+). It catalyses the reaction L-aspartate + NAD(+) + H2O = oxaloacetate + NH4(+) + NADH + H(+). Its pathway is cofactor biosynthesis; NAD(+) biosynthesis; iminoaspartate from L-aspartate (dehydrogenase route): step 1/1. Its function is as follows. Specifically catalyzes the NAD or NADP-dependent dehydrogenation of L-aspartate to iminoaspartate. In Ralstonia pickettii (strain 12J), this protein is L-aspartate dehydrogenase.